A 330-amino-acid chain; its full sequence is ADP-L-glycero-D-manno-heptose-6-epimerase (330 aa).

Residues 11-12, 32-33, Lys39, Lys54, 75-79, and Asn92 each bind NADP(+); these read FI, DN, and EGACS. The active-site Proton acceptor is Tyr139. Lys143 contacts NADP(+). Position 168 (Asn168) interacts with substrate. NADP(+)-binding residues include Val169 and Lys177. Lys177 acts as the Proton acceptor in catalysis. Substrate contacts are provided by residues Arg179, His186, 200–203, Arg213, and Tyr292; that span reads FGEY.

This sequence belongs to the NAD(P)-dependent epimerase/dehydratase family. HldD subfamily. Homopentamer. It depends on NADP(+) as a cofactor.

The enzyme catalyses ADP-D-glycero-beta-D-manno-heptose = ADP-L-glycero-beta-D-manno-heptose. It participates in nucleotide-sugar biosynthesis; ADP-L-glycero-beta-D-manno-heptose biosynthesis; ADP-L-glycero-beta-D-manno-heptose from D-glycero-beta-D-manno-heptose 7-phosphate: step 4/4. Functionally, catalyzes the interconversion between ADP-D-glycero-beta-D-manno-heptose and ADP-L-glycero-beta-D-manno-heptose via an epimerization at carbon 6 of the heptose. The chain is ADP-L-glycero-D-manno-heptose-6-epimerase from Burkholderia vietnamiensis (strain G4 / LMG 22486) (Burkholderia cepacia (strain R1808)).